The following is a 50-amino-acid chain: Photosystem II reaction center protein M (50 aa).

Residues G7–I27 traverse the membrane as a helical segment.

It belongs to the PsbM family. PSII is composed of 1 copy each of membrane proteins PsbA, PsbB, PsbC, PsbD, PsbE, PsbF, PsbH, PsbI, PsbJ, PsbK, PsbL, PsbM, PsbT, PsbX, PsbY, Psb30/Ycf12, peripheral proteins PsbO, CyanoQ (PsbQ), PsbU, PsbV and a large number of cofactors. It forms dimeric complexes.

Its subcellular location is the cellular thylakoid membrane. Functionally, one of the components of the core complex of photosystem II (PSII). PSII is a light-driven water:plastoquinone oxidoreductase that uses light energy to abstract electrons from H(2)O, generating O(2) and a proton gradient subsequently used for ATP formation. It consists of a core antenna complex that captures photons, and an electron transfer chain that converts photonic excitation into a charge separation. This subunit is found at the monomer-monomer interface. The polypeptide is Photosystem II reaction center protein M (Prochlorococcus marinus subsp. pastoris (strain CCMP1986 / NIES-2087 / MED4)).